The chain runs to 456 residues: Outer membrane protein assembly factor BamB (456 aa).

The signal sequence occupies residues 1–19; it reads MKKLLFITAPLLLSVLTAS. Residue C20 is the site of N-palmitoyl cysteine attachment. C20 is lipidated: S-diacylglycerol cysteine.

Belongs to the BamB family. In terms of assembly, part of the Bam complex.

It localises to the cell outer membrane. Its function is as follows. Part of the outer membrane protein assembly complex, which is involved in assembly and insertion of beta-barrel proteins into the outer membrane. The sequence is that of Outer membrane protein assembly factor BamB from Francisella tularensis subsp. tularensis (strain SCHU S4 / Schu 4).